Consider the following 301-residue polypeptide: Porphobilinogen deaminase (301 aa).

Cys-235 carries the S-(dipyrrolylmethanemethyl)cysteine modification.

It belongs to the HMBS family. As to quaternary structure, monomer. Dipyrromethane is required as a cofactor.

It catalyses the reaction 4 porphobilinogen + H2O = hydroxymethylbilane + 4 NH4(+). Its pathway is porphyrin-containing compound metabolism; protoporphyrin-IX biosynthesis; coproporphyrinogen-III from 5-aminolevulinate: step 2/4. Tetrapolymerization of the monopyrrole PBG into the hydroxymethylbilane pre-uroporphyrinogen in several discrete steps. This is Porphobilinogen deaminase from Thermus thermophilus (strain ATCC BAA-163 / DSM 7039 / HB27).